The following is a 1112-amino-acid chain: Glutamate receptor-interacting protein 1 (1112 aa).

The residue at position 43 (Ser43) is a Phosphoserine. PDZ domains follow at residues 53 to 136, 150 to 238, 252 to 336, 471 to 560, 572 to 657, and 672 to 754; these read VVEL…EYEL, TVEV…EYDV, LVEV…LPHH, EVVL…EFDV, HVKL…RKDE, and TVEL…KKQT. Disordered stretches follow at residues 752–796, 841–886, and 922–963; these read KQTD…VYPS, KRAS…AEQE, and NHEA…DVGR. The span at 869 to 880 shows a compositional bias: low complexity; that stretch reads STASGFAGASDS. The span at 928–958 shows a compositional bias: polar residues; that stretch reads ARSQLGRQASFQERSNSRPHYSQTTRSNTLP. One can recognise a PDZ 7 domain in the interval 988 to 1070; sequence KVTLYKDSGM…KLDLVISRNP (83 aa). Residues 1077-1112 form a disordered region; sequence IEQPALPSDWSEQNSAFFQQPSHGGNLETREPTNTL. The span at 1086 to 1099 shows a compositional bias: polar residues; that stretch reads WSEQNSAFFQQPSH.

Interacts with EFNB1, EPHA7, EPHB2, EFNB3, KIF5A, KIF5C, KIF5B and the C-terminal tail of PRLHR. Forms a ternary complex with GRIA2 and CSPG4. Can form homomultimers or heteromultimers with GRIP2. Interacts with GRIA2, GRIA3, GRIPAP1/GRASP1, PPFIA1, PPFIA4, FRAS1, PLCD4, PTPRF and liprins-alpha. Interacts with ATAD1 in an ATP-dependent manner. ATAD1-catalyzed ATP hydrolysis disrupts binding to ATAD1 and to GRIA2 and leads to AMPAR complex disassembly. Interacts with SLC30A9. Interacts with BUD23. Forms a complex with NSG1, GRIA2 and STX12; controls the intracellular fate of AMPAR and the endosomal sorting of the GRIA2 subunit toward recycling and membrane targeting. Interacts with NSG1. As to expression, expressed in brain, testis and retina. In brain highly expressed in the olfactory bulb, cortex and hippocampus and lower level in thalamus, cerebellum and spinal cord. In brain it is found in the perikaryon, dendrites, dendritic shafts, dendritic spines and, excitatory and inhibitory synapses of neurons. In retina, it is most abundant in the plexiform layers than in perikarya.

It localises to the cytoplasmic vesicle. Its subcellular location is the perikaryon. It is found in the cell projection. The protein localises to the dendrite. The protein resides in the cytoplasm. It localises to the endomembrane system. Its subcellular location is the postsynaptic cell membrane. It is found in the postsynaptic density. The protein localises to the endoplasmic reticulum membrane. In terms of biological role, may play a role as a localized scaffold for the assembly of a multiprotein signaling complex and as mediator of the trafficking of its binding partners at specific subcellular location in neurons. Through complex formation with NSG1, GRIA2 and STX12 controls the intracellular fate of AMPAR and the endosomal sorting of the GRIA2 subunit toward recycling and membrane targeting. This is Glutamate receptor-interacting protein 1 (Grip1) from Rattus norvegicus (Rat).